Reading from the N-terminus, the 238-residue chain is Large ribosomal subunit protein uL3 (238 aa).

At Q157 the chain carries N5-methylglutamine.

It belongs to the universal ribosomal protein uL3 family. Part of the 50S ribosomal subunit. Forms a cluster with proteins L14 and L19. Post-translationally, methylated by PrmB.

In terms of biological role, one of the primary rRNA binding proteins, it binds directly near the 3'-end of the 23S rRNA, where it nucleates assembly of the 50S subunit. The chain is Large ribosomal subunit protein uL3 from Ruthia magnifica subsp. Calyptogena magnifica.